The sequence spans 126 residues: UPF0212 protein TON_0350 (126 aa).

It belongs to the UPF0212 family.

This is UPF0212 protein TON_0350 from Thermococcus onnurineus (strain NA1).